Here is a 146-residue protein sequence, read N- to C-terminus: Cytochrome c-type biogenesis protein CcmE (146 aa).

Residues 1–8 (MHPKRKKR) lie on the Cytoplasmic side of the membrane. The helical; Signal-anchor for type II membrane protein transmembrane segment at 9–29 (LLIVLAGLAVVAVASGLILNA) threads the bilayer. Over 30-146 (FRSNLVFFHT…IQRAGETVVQ (117 aa)) the chain is Periplasmic. 2 residues coordinate heme: His-124 and Tyr-128.

This sequence belongs to the CcmE/CycJ family.

It localises to the cell inner membrane. Its function is as follows. Heme chaperone required for the biogenesis of c-type cytochromes. Transiently binds heme delivered by CcmC and transfers the heme to apo-cytochromes in a process facilitated by CcmF and CcmH. The chain is Cytochrome c-type biogenesis protein CcmE from Laribacter hongkongensis (strain HLHK9).